Reading from the N-terminus, the 88-residue chain is Small ribosomal subunit protein bS20 (88 aa).

It belongs to the bacterial ribosomal protein bS20 family.

Functionally, binds directly to 16S ribosomal RNA. This chain is Small ribosomal subunit protein bS20, found in Methylorubrum populi (strain ATCC BAA-705 / NCIMB 13946 / BJ001) (Methylobacterium populi).